Reading from the N-terminus, the 317-residue chain is Cell division protein FtsX (317 aa).

The Cytoplasmic segment spans residues 1–39 (MAIVRHKQPPLRRFMMYWVDHARQAFSSLGELWRNPLAS). The helical transmembrane segment at 40-60 (LMTLAVLGVSLALPSCFHVLL) threads the bilayer. Over 61 to 188 (KNAEVVEGSW…LQGIMNLLRH (128 aa)) the chain is Periplasmic. Residues 189–209 (TITGIAVLLLSAVLLIVGNTL) form a helical membrane-spanning segment. Residues 210–241 (RLNILNQRSEIEVLKLVGATDAFIHRPFLYTG) lie on the Cytoplasmic side of the membrane. Residues 242–262 (IWFGVIGGMLAWWLTEVMVIW) form a helical membrane-spanning segment. Residues 263–280 (SEGVVNELAGLYNSNFRL) are Periplasmic-facing. Residues 281–301 (VGMGAVDGINLILLGALLGLI) traverse the membrane as a helical segment. Over 302–317 (ASWFSVHRHIRDIEPS) the chain is Cytoplasmic.

Belongs to the ABC-4 integral membrane protein family. FtsX subfamily. Forms a membrane-associated complex with FtsE.

Its subcellular location is the cell inner membrane. In terms of biological role, part of the ABC transporter FtsEX involved in cellular division. Encoded in an operon consisting of genes ftsY, ftsE and ftsX. The protein is Cell division protein FtsX of Aeromonas hydrophila.